The sequence spans 29 residues: Cytochrome c oxidase subunit 7A1, mitochondrial (29 aa).

The segment covering 1–13 (LENRVAEKQKLFQ) has biased composition (basic and acidic residues). The segment at 1–29 (LENRVAEKQKLFQEDNGLPVHLKGGATDN) is disordered.

This sequence belongs to the cytochrome c oxidase VIIa family. In terms of assembly, component of the complex IV (CIV, cytochrome c oxidase), a multisubunit enzyme composed of 14 subunits. The complex is composed of a catalytic core of 3 subunits MT-CO1, MT-CO2 and MT-CO3, encoded in the mitochondrial DNA, and 11 supernumerary subunits COX4I1 (or COX4I2), COX5A, COX5B, COX6A2 (or COX6A1), COX6B1 (or COX6B2), COX6C, COX7A1 (or COX7A2), COX7B, COX7C, COX8B and NDUFA4, which are encoded in the nuclear genome. The complex exists as a monomer or a dimer and forms supercomplexes (SCs) in the inner mitochondrial membrane with NADH-ubiquinone oxidoreductase (complex I, CI) and ubiquinol-cytochrome c oxidoreductase (cytochrome b-c1 complex, complex III, CIII), resulting in different assemblies (supercomplex SCI(1)III(2)IV(1) and megacomplex MCI(2)III(2)IV(2)).

The protein localises to the mitochondrion inner membrane. Its pathway is energy metabolism; oxidative phosphorylation. In terms of biological role, component of the mitochondrial respiratory complex IV (CIV, also named cytochrome c oxidase complex), the last enzyme in the mitochondrial electron transport chain which drives oxidative phosphorylation. The CIV complex is the component of the respiratory chain that catalyzes the reduction of oxygen to water. Acts as an assembly factor that specifically drives the homodimerization of CIV complexes, mediating the formation of mitochondrial respiratory supercomplexes (respirasomes) containing two CIV: supercomplxes with two molecules of CIV show improved activity. Despite being highly expressed in brown adipose tissue, not required for thermogenesis. In Ovis aries (Sheep), this protein is Cytochrome c oxidase subunit 7A1, mitochondrial (COX7A1).